The primary structure comprises 248 residues: Polyhedrin (248 aa).

An N-terminal signal peptide occupies residues 1–27 (MADVAGTSNRDFRGREQRLFNSEQYNY). Residues Asn28, Asn77, Asn86, and Asn237 are each glycosylated (N-linked (GlcNAc...) asparagine; by host).

It is found in the host cytoplasm. Major component of the virus occlusion bodies, which are large proteinaceous structures (polyhedra), that protect the virus from the outside environment for extended periods until they are ingested by insect larvae. This is Polyhedrin from Bombyx mori cytoplasmic polyhedrosis virus (BmCPV).